The chain runs to 528 residues: MSKQILYQDDARKALEKGMDILTEAVSVTLGPKGRNVVLEKKFGAPQIINDGVTIAKEISLENHIENTGVALIRQAASKTNDVAGDGTTTATVLASAIVKQGMRNVAAGSNPMAIKKGIEKATNFVVSKIAEYAKPVEDTKAIIQVASLSSGNDIEVGKMIANAIEKVGREGVISLEEGKSTNTILEITEGMQFEKGFISPYFVTDTERMEVLQENPFILFTDKKITLVQQELVPLLEQIAKTSRPLLIIAEDIEKEALATIVVNKLRGILNVVAVRAPGFGDRRKSLLEDMSILTNGQVITEDAGLSLDTVQLDMLGKARRVIVTKDSTTIIADGHEIKVKSRCEQIKRQIETSDSLYEREKLQERLAKLSGGVAVIKVGAATETEMKDKKLRLGDAINATKAAIEEGIVPGGGATNVHISSELFTWAKNNLVEDELIGALIVERAVTYPLRRIAFNAGDNGAVIVEKVKSHDFHIGYDAANGNIVNMYDRGIIDPAKVARSALQNAASIAAMVLTTECIVVDKVDD.

Residues 29–32 (TLGP), 86–90 (DGTTT), glycine 414, 480–482 (DAA), and aspartate 496 contribute to the ATP site.

The protein belongs to the chaperonin (HSP60) family. In terms of assembly, forms a cylinder of 14 subunits composed of two heptameric rings stacked back-to-back. Interacts with the co-chaperonin GroES.

Its subcellular location is the plastid. The protein localises to the chloroplast. It catalyses the reaction ATP + H2O + a folded polypeptide = ADP + phosphate + an unfolded polypeptide.. Its function is as follows. Together with its co-chaperonin GroES, plays an essential role in assisting protein folding. The GroEL-GroES system forms a nano-cage that allows encapsulation of the non-native substrate proteins and provides a physical environment optimized to promote and accelerate protein folding. The polypeptide is Chaperonin GroEL, chloroplastic (Pyropia yezoensis (Susabi-nori)).